A 198-amino-acid polypeptide reads, in one-letter code: Glycerol-3-phosphate acyltransferase (198 aa).

Transmembrane regions (helical) follow at residues 10–30 (LIPI…WILV), 57–77 (GISF…ILIL), 86–106 (IMYL…WFLF), 118–138 (VVLS…AVVF), and 160–180 (AVTE…IVLI).

It belongs to the PlsY family. As to quaternary structure, probably interacts with PlsX.

It localises to the cell inner membrane. It carries out the reaction an acyl phosphate + sn-glycerol 3-phosphate = a 1-acyl-sn-glycero-3-phosphate + phosphate. It participates in lipid metabolism; phospholipid metabolism. Catalyzes the transfer of an acyl group from acyl-phosphate (acyl-PO(4)) to glycerol-3-phosphate (G3P) to form lysophosphatidic acid (LPA). This enzyme utilizes acyl-phosphate as fatty acyl donor, but not acyl-CoA or acyl-ACP. This chain is Glycerol-3-phosphate acyltransferase, found in Anaplasma marginale (strain Florida).